The following is a 333-amino-acid chain: HTH-type transcriptional repressor PurR (333 aa).

Residues 2-56 form the HTH lacI-type domain; the sequence is ATIKDVAKLASVSTTTVSHVINKTRFVAEATQKRVWEAVEELNYAPSAVARSLKC. A DNA-binding region (H-T-H motif) is located at residues 4-23; that stretch reads IKDVAKLASVSTTTVSHVIN. The DNA-binding element occupies 48–56; it reads SAVARSLKC. Hypoxanthine is bound by residues F73, K189, T191, F220, and D274.

Homodimer.

It participates in purine metabolism; purine nucleotide biosynthesis [regulation]. Its function is as follows. Is the main repressor of the genes involved in the de novo synthesis of purine nucleotides, regulating purB, purC, purEK, purF, purHD, purL, purMN and guaBA expression. PurR is allosterically activated to bind its cognate DNA by binding the purine corepressors, hypoxanthine or guanine, thereby effecting transcription repression. In Aliivibrio salmonicida (strain LFI1238) (Vibrio salmonicida (strain LFI1238)), this protein is HTH-type transcriptional repressor PurR.